A 202-amino-acid polypeptide reads, in one-letter code: Type II restriction enzyme MthZI (202 aa).

The catalysed reaction is Endonucleolytic cleavage of DNA to give specific double-stranded fragments with terminal 5'-phosphates.. A P subtype restriction enzyme that recognizes the double-stranded sequence 5'-CTAG-3' and cleaves after C-1. The chain is Type II restriction enzyme MthZI from Methanothermobacter thermautotrophicus (Methanobacterium thermoformicicum).